We begin with the raw amino-acid sequence, 216 residues long: Pyridoxine/pyridoxamine 5'-phosphate oxidase (216 aa).

Residues 9–12 and arginine 67 contribute to the substrate site; that span reads RLSY. FMN-binding positions include 62–67, 77–78, lysine 84, and glutamine 106; these read RIVLLR and YT. Positions 124, 128, and 132 each coordinate substrate. Residues 142–143 and tryptophan 188 each bind FMN; that span reads QS. 194–196 is a substrate binding site; the sequence is RMH. FMN is bound at residue arginine 198.

This sequence belongs to the pyridoxamine 5'-phosphate oxidase family. Homodimer. FMN is required as a cofactor.

It catalyses the reaction pyridoxamine 5'-phosphate + O2 + H2O = pyridoxal 5'-phosphate + H2O2 + NH4(+). The enzyme catalyses pyridoxine 5'-phosphate + O2 = pyridoxal 5'-phosphate + H2O2. Its pathway is cofactor metabolism; pyridoxal 5'-phosphate salvage; pyridoxal 5'-phosphate from pyridoxamine 5'-phosphate: step 1/1. It participates in cofactor metabolism; pyridoxal 5'-phosphate salvage; pyridoxal 5'-phosphate from pyridoxine 5'-phosphate: step 1/1. Functionally, catalyzes the oxidation of either pyridoxine 5'-phosphate (PNP) or pyridoxamine 5'-phosphate (PMP) into pyridoxal 5'-phosphate (PLP). The chain is Pyridoxine/pyridoxamine 5'-phosphate oxidase from Psychrobacter arcticus (strain DSM 17307 / VKM B-2377 / 273-4).